The primary structure comprises 314 residues: UPF0761 membrane protein VP0125 (314 aa).

Transmembrane regions (helical) follow at residues 41-61 (YLAY…LSIL), 104-124 (MSAV…SNID), 139-159 (LVFS…LVGA), 185-205 (FLRW…YILV), 217-237 (VGAA…ALYI), and 249-269 (ALAA…IVLL). Residues 295-314 (ESQLANEGSESSDSANSTSQ) are disordered.

Belongs to the UPF0761 family.

The protein resides in the cell inner membrane. This is UPF0761 membrane protein VP0125 from Vibrio parahaemolyticus serotype O3:K6 (strain RIMD 2210633).